The chain runs to 288 residues: Ribosomal RNA small subunit methyltransferase A (288 aa).

S-adenosyl-L-methionine-binding residues include N28, L30, G55, E77, D103, and N123.

Belongs to the class I-like SAM-binding methyltransferase superfamily. rRNA adenine N(6)-methyltransferase family. RsmA subfamily.

Its subcellular location is the cytoplasm. It catalyses the reaction adenosine(1518)/adenosine(1519) in 16S rRNA + 4 S-adenosyl-L-methionine = N(6)-dimethyladenosine(1518)/N(6)-dimethyladenosine(1519) in 16S rRNA + 4 S-adenosyl-L-homocysteine + 4 H(+). Specifically dimethylates two adjacent adenosines (A1518 and A1519) in the loop of a conserved hairpin near the 3'-end of 16S rRNA in the 30S particle. May play a critical role in biogenesis of 30S subunits. This is Ribosomal RNA small subunit methyltransferase A from Xanthobacter autotrophicus (strain ATCC BAA-1158 / Py2).